Reading from the N-terminus, the 508-residue chain is Photosystem II CP47 reaction center protein (508 aa).

6 helical membrane-spanning segments follow: residues 21-36 (AVHLMHTALVSGWAGS), 101-115 (IILSGLLFLAAIWHW), 140-156 (GIHLFLSGVLCFGFGAF), 203-218 (IAAGILGIIAGLFHLS), 237-252 (VLSSSIAAVFWAAFVV), and 457-472 (NFALLFFFGHIWHGSR).

It belongs to the PsbB/PsbC family. PsbB subfamily. PSII is composed of 1 copy each of membrane proteins PsbA, PsbB, PsbC, PsbD, PsbE, PsbF, PsbH, PsbI, PsbJ, PsbK, PsbL, PsbM, PsbT, PsbX, PsbY, PsbZ, Psb30/Ycf12, at least 3 peripheral proteins of the oxygen-evolving complex and a large number of cofactors. It forms dimeric complexes. It depends on Binds multiple chlorophylls. PSII binds additional chlorophylls, carotenoids and specific lipids. as a cofactor.

Its subcellular location is the plastid. It is found in the chloroplast thylakoid membrane. One of the components of the core complex of photosystem II (PSII). It binds chlorophyll and helps catalyze the primary light-induced photochemical processes of PSII. PSII is a light-driven water:plastoquinone oxidoreductase, using light energy to abstract electrons from H(2)O, generating O(2) and a proton gradient subsequently used for ATP formation. The polypeptide is Photosystem II CP47 reaction center protein (Staurastrum punctulatum (Green alga)).